The sequence spans 3432 residues: Genome polyprotein (3432 aa).

An interaction with host EXOC1 region spans residues 2-15; it reads TKKPGGPGKNRAIN. Over 2–109 the chain is Cytoplasmic; sequence TKKPGGPGKN…RKQNKRGGNE (108 aa). The interval 37–72 is hydrophobic; homodimerization of capsid protein C; sequence LLDGRGPVRFVLALITFFKFTALAPTKALLGRWKAV. The propeptide at 106-127 is ER anchor for the capsid protein C, removed in mature form by serine protease NS3; sequence GGNEGSIMWLASLAVVIACAGA. A helical membrane pass occupies residues 110–130; sequence GSIMWLASLAVVIACAGAMKL. Residues 131–253 lie on the Extracellular side of the membrane; the sequence is SNFQGKLLMT…ATRYLMKTEN (123 aa). Asparagine 142 carries N-linked (GlcNAc...) asparagine; by host glycosylation. Residues 254–274 traverse the membrane as a helical segment; the sequence is WIIRNPGYAFLAAVLGWMLGS. Topologically, residues 275–279 are cytoplasmic; sequence NNGQR. A helical transmembrane segment spans residues 280–294; it reads VVFTILLLLVAPAYS. The Extracellular segment spans residues 295–746; sequence FNCLGMGNRD…QVFGGAFRTL (452 aa). 6 disulfides stabilise this stretch: cysteine 297–cysteine 324, cysteine 354–cysteine 410, cysteine 354–cysteine 415, cysteine 368–cysteine 399, cysteine 386–cysteine 410, and cysteine 386–cysteine 415. The interval 392–405 is fusion peptide; it reads DRGWGNGCGLFGKG. Asparagine 448 carries an N-linked (GlcNAc...) asparagine; by host glycan. Disulfide bonds link cysteine 484/cysteine 581 and cysteine 598/cysteine 629. Residues 747–767 form a helical membrane-spanning segment; it reads FGGMSWITQGLMGALLLWMGV. The Cytoplasmic segment spans residues 768–773; sequence NARDRS. A helical transmembrane segment spans residues 774–794; it reads IALAFLATGGVLVFLATNVHA. Residues 795 to 1219 are Extracellular-facing; it reads DTGCAIDITR…AFAEANSGGD (425 aa). Disulfide bonds link cysteine 798/cysteine 809, cysteine 849/cysteine 937, cysteine 973/cysteine 1017, cysteine 1074/cysteine 1123, cysteine 1085/cysteine 1106, and cysteine 1107/cysteine 1110. Asparagine 924 and asparagine 1001 each carry an N-linked (GlcNAc...) asparagine; by host glycan. Residues 1220-1240 traverse the membrane as a helical segment; the sequence is VLHLALIAVFKIQPAFLVMNM. Residues 1241-1250 are Cytoplasmic-facing; sequence LSTRWTNQEN. Residues 1251-1271 traverse the membrane as a helical segment; sequence VILVLGAAFFQLASVDLQIGV. Histidine 1272 is a topological domain (lumenal). Residues 1273 to 1293 form a helical membrane-spanning segment; that stretch reads GILNAAAIAWMIVRAITFPTT. The Cytoplasmic segment spans residues 1294–1309; sequence SSVTMPVLALLTPGMR. The chain crosses the membrane as a helical span at residues 1310-1330; the sequence is ALYLDTYRIILLVIGICSLLH. Over 1331 to 1341 the chain is Lumenal; sequence ERKKTMAKKKG. The helical transmembrane segment at 1342 to 1362 threads the bilayer; the sequence is AVLLGLALTSTGWFSPTTIAA. Over 1363–1374 the chain is Cytoplasmic; it reads GLMVCNPNKKRG. 2 interaction with human SPCS1 regions span residues 1374-1423 and 1458-1505; these read GWPA…GKAT and FHLI…TKRG. Residues 1375–1395 traverse the membrane as a helical segment; that stretch reads WPATEFLSAVGLMFAIVGGLA. Topologically, residues 1396 to 1398 are lumenal; that stretch reads ELD. A helical transmembrane segment spans residues 1399–1419; it reads IESMSIPFMLAGLMAVSYVVS. Over 1420–1476 the chain is Cytoplasmic; sequence GKATDMWLERAADISWEMDAAITGSSRRLDVKLDDDGDFHLIDDPGVPWKVWVLRMS. The tract at residues 1427 to 1466 is interacts with and activates NS3 protease; it reads LERAADISWEMDAAITGSSRRLDVKLDDDGDFHLIDDPGV. The segment at residues 1477–1497 is an intramembrane region (helical); sequence CIGLAALTPWAIVPAAFGYWL. Topologically, residues 1498-2173 are cytoplasmic; the sequence is TLKTTKRGGV…RMALEELPDA (676 aa). The region spanning 1505 to 1682 is the Peptidase S7 domain; it reads GGVFWDTPSP…DRQEEPVPEA (178 aa). Catalysis depends on charge relay system; for serine protease NS3 activity residues histidine 1555, aspartate 1579, and serine 1639. The Helicase ATP-binding domain maps to 1685–1841; that stretch reads PNMLRKRQMT…DSNAPIHDLQ (157 aa). The segment at 1689 to 1692 is important for RNA-binding; that stretch reads RKRQ. Position 1698-1705 (1698-1705) interacts with ATP; it reads LHPGSGKT. Positions 1789-1792 match the DEAH box motif; it reads DEAH. The 166-residue stretch at 1852–2017 folds into the Helicase C-terminal domain; it reads GYEWITEYAG…GLVAQLYGPE (166 aa). The residue at position 1893 (lysine 1893) is an N6-acetyllysine; by host. Residues 1950–1972 form a disordered region; that stretch reads NPSPITSASAAQRRGRVGRNPNQ. Residues 2168–2172 form a regulates the ATPase activity of NS3 helicase region; that stretch reads EELPD. A helical membrane pass occupies residues 2174-2194; sequence LETITLIVAITVMTGGFFLLM. The Lumenal portion of the chain corresponds to 2195–2199; sequence MQRKG. The segment at residues 2200–2220 is an intramembrane region (helical); sequence IGKMGLGALVLTLATFFLWAA. Glutamate 2221 is a topological domain (lumenal). A helical transmembrane segment spans residues 2222–2242; that stretch reads VPGTKIAGTLLIALLLMVVLI. At 2243-2257 the chain is on the cytoplasmic side; it reads PEPEKQRSQTDNQLA. Residues 2258 to 2278 form a helical membrane-spanning segment; that stretch reads VFLICVLTVVGVVAANEYGML. At 2279-2311 the chain is on the lumenal side; that stretch reads EKTKADLKSMFGGKTQASGLTGLPSMALDLRPA. The helical intramembrane region spans 2312-2332; sequence TAWALYGGSTVVLTPLLKHLI. The Lumenal portion of the chain corresponds to 2333–2368; it reads TSEYVTTSLASINSQAGSLFVLPRGVPFTDLDLTVG. Residues 2369 to 2389 form a helical membrane-spanning segment; that stretch reads LVFLGCWGQITLTTFLTAMVL. Residues 2390 to 2444 lie on the Cytoplasmic side of the membrane; sequence ATLHYGYMLPGWQAEALRAAQRRTAAGIMKNAVVDGMVATDVPELERTTPLMQKK. A helical membrane pass occupies residues 2445 to 2465; sequence VGQVLLIGVSVAAFLVNPNVT. Residues 2466–2469 are Lumenal-facing; that stretch reads TVRE. The helical transmembrane segment at 2470-2490 threads the bilayer; the sequence is AGVLVTAATLTLWDNGASAVW. Residues 2491-3432 lie on the Cytoplasmic side of the membrane; sequence NSTTATGLCH…DVLIQEDRVI (942 aa). Residues 2528 to 2793 enclose the mRNA cap 0-1 NS5-type MT domain; the sequence is GRPGGRTLGE…DVNLGSGTRA (266 aa). Serine 2583 lines the S-adenosyl-L-methionine pocket. Serine 2583 carries the phosphoserine modification. Lysine 2588 serves as the catalytic For 2'-O-MTase activity. S-adenosyl-L-methionine contacts are provided by glycine 2613, tryptophan 2614, threonine 2631, lysine 2632, aspartate 2658, and valine 2659. Catalysis depends on aspartate 2673, which acts as the For 2'-O-MTase activity. Isoleucine 2674 provides a ligand contact to S-adenosyl-L-methionine. Residues lysine 2709 and glutamate 2745 each act as for 2'-O-MTase activity in the active site. Tyrosine 2747 contributes to the S-adenosyl-L-methionine binding site. The Zn(2+) site is built by glutamate 2967, histidine 2971, cysteine 2976, and cysteine 2979. The RdRp catalytic domain maps to 3057 to 3209; sequence GKMYADDTAG…KPLDDRFATA (153 aa). 3 residues coordinate Zn(2+): histidine 3244, cysteine 3260, and cysteine 3379.

This sequence in the N-terminal section; belongs to the class I-like SAM-binding methyltransferase superfamily. mRNA cap 0-1 NS5-type methyltransferase family. In terms of assembly, homodimer. Interacts (via N-terminus) with host EXOC1 (via C-terminus); this interaction results in EXOC1 degradation through the proteasome degradation pathway. As to quaternary structure, forms heterodimers with envelope protein E in the endoplasmic reticulum and Golgi. Homodimer; in the endoplasmic reticulum and Golgi. Interacts with protein prM. Interacts with non-structural protein 1. Interacts with host HSPA5. In terms of assembly, homodimer; Homohexamer when secreted. Interacts with envelope protein E. NS1 interacts with NS4B. Interacts with host complement protein CFH; this interaction leads to the degradation of C3. As to quaternary structure, interacts (via N-terminus) with serine protease NS3. Forms a heterodimer with serine protease NS3. May form homooligomers. Interacts with human SPCS1. In terms of assembly, forms a heterodimer with NS2B. Interacts with non-structural protein 2A (via N-terminus). Interacts with NS4B. Interacts with unphosphorylated RNA-directed RNA polymerase NS5; this interaction stimulates RNA-directed RNA polymerase NS5 guanylyltransferase activity. Interacts with host ILF2. As to quaternary structure, interacts with serine protease NS3. Homodimer. Interacts with host STAT2; this interaction inhibits the phosphorylation of the latter, and, when all viral proteins are present (polyprotein), targets STAT2 for degradation. Interacts with serine protease NS3. Mn(2+) is required as a cofactor. Mg(2+) serves as cofactor. Specific enzymatic cleavages in vivo yield mature proteins. Cleavages in the lumen of endoplasmic reticulum are performed by host signal peptidase, whereas cleavages in the cytoplasmic side are performed by serine protease NS3. Signal cleavage at the 2K-4B site requires a prior NS3 protease-mediated cleavage at the 4A-2K site. Post-translationally, cleaved in post-Golgi vesicles by a host furin, releasing the mature small envelope protein M, and peptide pr. This cleavage is incomplete as up to 30% of viral particles still carry uncleaved prM. In terms of processing, N-glycosylated. N-glycosylated. The excreted form is glycosylated and this is required for efficient secretion of the protein from infected cells. Post-translationally, acetylated by host KAT5. Acetylation modulates NS3 RNA-binding and unwinding activities and plays an important positive role for viral replication. In terms of processing, phosphorylated on serines residues. This phosphorylation may trigger NS5 nuclear localization.

Its subcellular location is the host endoplasmic reticulum membrane. It is found in the virion. The protein localises to the host nucleus. It localises to the host cytoplasm. The protein resides in the host perinuclear region. Its subcellular location is the secreted. It is found in the virion membrane. The protein localises to the host cell surface. The catalysed reaction is Selective hydrolysis of -Xaa-Xaa-|-Yaa- bonds in which each of the Xaa can be either Arg or Lys and Yaa can be either Ser or Ala.. It carries out the reaction RNA(n) + a ribonucleoside 5'-triphosphate = RNA(n+1) + diphosphate. The enzyme catalyses a ribonucleoside 5'-triphosphate + H2O = a ribonucleoside 5'-diphosphate + phosphate + H(+). It catalyses the reaction ATP + H2O = ADP + phosphate + H(+). The catalysed reaction is a 5'-end (5'-triphosphoguanosine)-ribonucleoside in mRNA + S-adenosyl-L-methionine = a 5'-end (N(7)-methyl 5'-triphosphoguanosine)-ribonucleoside in mRNA + S-adenosyl-L-homocysteine. It carries out the reaction a 5'-end (N(7)-methyl 5'-triphosphoguanosine)-ribonucleoside in mRNA + S-adenosyl-L-methionine = a 5'-end (N(7)-methyl 5'-triphosphoguanosine)-(2'-O-methyl-ribonucleoside) in mRNA + S-adenosyl-L-homocysteine + H(+). Functionally, plays a role in virus budding by binding to the cell membrane and gathering the viral RNA into a nucleocapsid that forms the core of a mature virus particle. During virus entry, may induce genome penetration into the host cytoplasm after hemifusion induced by the surface proteins. Can migrate to the cell nucleus where it modulates host functions. Overcomes the anti-viral effects of host EXOC1 by sequestering and degrading the latter through the proteasome degradation pathway. In terms of biological role, inhibits RNA silencing by interfering with host Dicer. Its function is as follows. Prevents premature fusion activity of envelope proteins in trans-Golgi by binding to envelope protein E at pH 6.0. After virion release in extracellular space, gets dissociated from E dimers. Acts as a chaperone for envelope protein E during intracellular virion assembly by masking and inactivating envelope protein E fusion peptide. prM is the only viral peptide matured by host furin in the trans-Golgi network probably to avoid catastrophic activation of the viral fusion activity in acidic Golgi compartment prior to virion release. prM-E cleavage is inefficient, and many virions are only partially matured. These uncleaved prM would play a role in immune evasion. Functionally, may play a role in virus budding. Exerts cytotoxic effects by activating a mitochondrial apoptotic pathway through M ectodomain. May display a viroporin activity. In terms of biological role, binds to host cell surface receptor and mediates fusion between viral and cellular membranes. Efficient virus attachment to cell is, at least in part, mediated by host HSPA5. Envelope protein is synthesized in the endoplasmic reticulum in the form of heterodimer with protein prM. They play a role in virion budding in the ER, and the newly formed immature particle is covered with 60 spikes composed of heterodimer between precursor prM and envelope protein E. The virion is transported to the Golgi apparatus where the low pH causes dissociation of PrM-E heterodimers and formation of E homodimers. prM-E cleavage is inefficient, and many virions are only partially matured. These uncleaved prM would play a role in immune evasion. Its function is as follows. Involved in immune evasion, pathogenesis and viral replication. Once cleaved off the polyprotein, is targeted to three destinations: the viral replication cycle, the plasma membrane and the extracellular compartment. Essential for viral replication. Required for formation of the replication complex and recruitment of other non-structural proteins to the ER-derived membrane structures. Excreted as a hexameric lipoparticle that plays a role against host immune response. Antagonizing the complement function. Binds to the host macrophages and dendritic cells. Inhibits signal transduction originating from Toll-like receptor 3 (TLR3). Component of the viral RNA replication complex that functions in virion assembly and antagonizes the host alpha/beta interferon antiviral response. Functionally, required cofactor for the serine protease function of NS3. May have membrane-destabilizing activity and form viroporins. In terms of biological role, displays three enzymatic activities: serine protease, NTPase and RNA helicase. NS3 serine protease, in association with NS2B, performs its autocleavage and cleaves the polyprotein at dibasic sites in the cytoplasm: C-prM, NS2A-NS2B, NS2B-NS3, NS3-NS4A, NS4A-2K and NS4B-NS5. NS3 RNA helicase binds RNA and unwinds dsRNA in the 3' to 5' direction. Its function is as follows. Regulates the ATPase activity of the NS3 helicase activity. NS4A allows NS3 helicase to conserve energy during unwinding. Functions as a signal peptide for NS4B and is required for the interferon antagonism activity of the latter. Functionally, induces the formation of ER-derived membrane vesicles where the viral replication takes place. Inhibits interferon (IFN)-induced host STAT1 phosphorylation and nuclear translocation, thereby preventing the establishment of cellular antiviral state by blocking the IFN-alpha/beta pathway. Inhibits STAT2 translocation in the nucleus after IFN-alpha treatment. In terms of biological role, replicates the viral (+) and (-) RNA genome. Performs the capping of genomes in the cytoplasm. NS5 methylates viral RNA cap at guanine N-7 and ribose 2'-O positions. Besides its role in RNA genome replication, also prevents the establishment of cellular antiviral state by blocking the interferon-alpha/beta (IFN-alpha/beta) signaling pathway. Inhibits host TYK2 and STAT2 phosphorylation, thereby preventing activation of JAK-STAT signaling pathway. The sequence is that of Genome polyprotein from Japanese encephalitis virus (strain SA-14) (JEV).